The sequence spans 90 residues: Probable Fe(2+)-trafficking protein (90 aa).

This sequence belongs to the Fe(2+)-trafficking protein family.

In terms of biological role, could be a mediator in iron transactions between iron acquisition and iron-requiring processes, such as synthesis and/or repair of Fe-S clusters in biosynthetic enzymes. The protein is Probable Fe(2+)-trafficking protein of Aeromonas hydrophila subsp. hydrophila (strain ATCC 7966 / DSM 30187 / BCRC 13018 / CCUG 14551 / JCM 1027 / KCTC 2358 / NCIMB 9240 / NCTC 8049).